We begin with the raw amino-acid sequence, 172 residues long: Large ribosomal subunit protein uL5 (172 aa).

Belongs to the universal ribosomal protein uL5 family. In terms of assembly, component of the large ribosomal subunit.

It is found in the nucleus. The protein resides in the cytoplasm. Its function is as follows. Component of the ribosome, a large ribonucleoprotein complex responsible for the synthesis of proteins in the cell. The small ribosomal subunit (SSU) binds messenger RNAs (mRNAs) and translates the encoded message by selecting cognate aminoacyl-transfer RNA (tRNA) molecules. The large subunit (LSU) contains the ribosomal catalytic site termed the peptidyl transferase center (PTC), which catalyzes the formation of peptide bonds, thereby polymerizing the amino acids delivered by tRNAs into a polypeptide chain. The nascent polypeptides leave the ribosome through a tunnel in the LSU and interact with protein factors that function in enzymatic processing, targeting, and the membrane insertion of nascent chains at the exit of the ribosomal tunnel. In Tetrahymena thermophila, this protein is Large ribosomal subunit protein uL5 (RPL11).